Consider the following 280-residue polypeptide: Large ribosomal subunit protein uL2 (280 aa).

The segment at 223–280 (VVMNPVDHPHGGGEGRTSGGRHPVTPWGKPTKGARTRNKNKASSKLIIRSRHAKKKGR) is disordered. Positions 254-280 (KGARTRNKNKASSKLIIRSRHAKKKGR) are enriched in basic residues.

This sequence belongs to the universal ribosomal protein uL2 family. In terms of assembly, part of the 50S ribosomal subunit. Forms a bridge to the 30S subunit in the 70S ribosome.

Its function is as follows. One of the primary rRNA binding proteins. Required for association of the 30S and 50S subunits to form the 70S ribosome, for tRNA binding and peptide bond formation. It has been suggested to have peptidyltransferase activity; this is somewhat controversial. Makes several contacts with the 16S rRNA in the 70S ribosome. The sequence is that of Large ribosomal subunit protein uL2 from Dinoroseobacter shibae (strain DSM 16493 / NCIMB 14021 / DFL 12).